We begin with the raw amino-acid sequence, 520 residues long: Cytochrome P450 monooxygenase TRI4 (520 aa).

A helical transmembrane segment spans residues 10–30 (LVNIPISHAVGVVAASTVIYF). N-linked (GlcNAc...) asparagine glycosylation is present at Asn-447. Cys-455 lines the heme pocket.

This sequence belongs to the cytochrome P450 family. Heme is required as a cofactor.

Its subcellular location is the membrane. It functions in the pathway sesquiterpene biosynthesis; trichothecene biosynthesis. In terms of biological role, cytochrome P450 monooxygenase; part of the core gene cluster that mediates the biosynthesis of trichothecenes, a very large family of chemically related bicyclic sesquiterpene compounds acting as mycotoxins, including T2-toxin. The biosynthesis of trichothecenes begins with the cyclization of farnesyl diphosphate to trichodiene and is catalyzed by the trichodiene synthase TRI5. Trichodiene undergoes a series of oxygenations catalyzed by the cytochrome P450 monooxygenase TRI4. TRI4 controls the addition of four oxygens at C-2, C-3, C-11, and the C-12, C-13-epoxide to form the intermediate isotrichotriol. Isotrichotriol then undergoes a non-enzymatic isomerization and cyclization to form isotrichodermol. During this process, the oxygen at the C-2 position becomes the pyran ring oxygen and the hydroxyl group at C-11 is lost. More complex type A trichothecenes are built by modifying isotrichodermol through a series of paired hydroxylation and acetylation or acylation steps. Isotrichodermol is converted to isotrichodermin by the acetyltransferase TRI101. TRI101 encodes a C-3 transacetylase that acts as a self-protection or resistance factor during biosynthesis and that the presence of a free C-3 hydroxyl group is a key component of Fusarium trichothecene phytotoxicity. A second hydroxyl group is added to C-15 by the trichothecene C-15 hydroxylase TRI11, producing 15-decalonectrin, which is then acetylated by TRI3, producing calonectrin. A third hydroxyl group is added at C-4 by the cytochrome P450 monooxygenase TRI13, converting calonectrin to 3,15-diacetoxyspirpenol, which is subsequently acetylated by the acetyltransferase TRI7. A fourth hydroxyl group is added to C-8 by the cytochrome P450 monooxygenase TRI1, followed by the addition of an isovaleryl moiety by TRI16. Finally, the acetyl group is removed from the C-3 position by the trichothecene C-3 esterase TRI8 to produce T-2 toxin. This Fusarium sporotrichioides protein is Cytochrome P450 monooxygenase TRI4.